The sequence spans 283 residues: MSKFLSQAAINTLRNTRLGSRQLVRSFAGISNTRNHREAGHQEWGCGQSAGRGLLELRMPVACRRSMFIQTQDTPNPESLKFLPGVDVLGKGNTYDFPNGTTAHSSPLAKLLFRVEGVKGVFFGADFITISKQEGAEWSLIKPEVFAVIMDFFASGLPVLNDAQPNADTEILEDDDETVMMIKELLDTRIRPTVQEDGGDIVFMGYEAGVVKLKMQGSCSSCPSSIVTLKNGVQNMLQFYIPEVESVEQVFDEADRMIDSEFERFEKNLKTLKQQEPSGGGPH.

The transit peptide at 1 to 65 (MSKFLSQAAI…ELRMPVACRR (65 aa)) directs the protein to the mitochondrion. The tract at residues 182–250 (IKELLDTRIR…IPEVESVEQV (69 aa)) is nifU. Residues Cys-219 and Cys-222 each contribute to the [4Fe-4S] cluster site.

Belongs to the NifU family.

It localises to the mitochondrion. Functionally, molecular scaffold for [Fe-S] cluster assembly of mitochondrial iron-sulfur proteins. The sequence is that of NFU1 iron-sulfur cluster scaffold homolog, mitochondrial from Drosophila sechellia (Fruit fly).